The sequence spans 185 residues: uncharacterized protein (185 aa).

The tract at residues 160-185 is disordered; that stretch reads QYTGPAVPSVPTTNLNDIGDPTKTVQ.

This is an uncharacterized protein from Saccharomyces cerevisiae (strain ATCC 204508 / S288c) (Baker's yeast).